The chain runs to 260 residues: Snake venom serine proteinase 4a (260 aa).

Positions 1 to 18 (MVLIRVLANLLILQLSYA) are cleaved as a signal peptide. Residues 19–24 (QMSSEL) constitute a propeptide that is removed on maturation. Residues 25–251 (VTGGDECNRN…HLDWIQRIIA (227 aa)) form the Peptidase S1 domain. 6 cysteine pairs are disulfide-bonded: cysteine 31–cysteine 163, cysteine 50–cysteine 66, cysteine 98–cysteine 258, cysteine 142–cysteine 212, cysteine 174–cysteine 191, and cysteine 202–cysteine 227. Histidine 65 serves as the catalytic Charge relay system. Asparagine 103 carries N-linked (GlcNAc...) asparagine glycosylation. Aspartate 110 (charge relay system) is an active-site residue. Residue serine 206 is the Charge relay system of the active site.

The protein belongs to the peptidase S1 family. Snake venom subfamily. In terms of assembly, monomer. In terms of tissue distribution, expressed by the venom gland.

It is found in the secreted. In terms of biological role, snake venom serine protease that may act in the hemostasis system of the prey. The chain is Snake venom serine proteinase 4a from Crotalus adamanteus (Eastern diamondback rattlesnake).